Reading from the N-terminus, the 398-residue chain is 1-deoxy-D-xylulose 5-phosphate reductoisomerase (398 aa).

NADPH-binding residues include threonine 13, glycine 14, serine 15, isoleucine 16, arginine 40, and asparagine 127. Lysine 128 provides a ligand contact to 1-deoxy-D-xylulose 5-phosphate. Glutamate 129 contributes to the NADPH binding site. Aspartate 153 serves as a coordination point for Mn(2+). Residues serine 154, glutamate 155, serine 188, and histidine 211 each coordinate 1-deoxy-D-xylulose 5-phosphate. Glutamate 155 serves as a coordination point for Mn(2+). Glycine 217 serves as a coordination point for NADPH. 4 residues coordinate 1-deoxy-D-xylulose 5-phosphate: serine 224, asparagine 229, lysine 230, and glutamate 233. Residue glutamate 233 participates in Mn(2+) binding.

The protein belongs to the DXR family. Requires Mg(2+) as cofactor. Mn(2+) is required as a cofactor.

The enzyme catalyses 2-C-methyl-D-erythritol 4-phosphate + NADP(+) = 1-deoxy-D-xylulose 5-phosphate + NADPH + H(+). It functions in the pathway isoprenoid biosynthesis; isopentenyl diphosphate biosynthesis via DXP pathway; isopentenyl diphosphate from 1-deoxy-D-xylulose 5-phosphate: step 1/6. Functionally, catalyzes the NADPH-dependent rearrangement and reduction of 1-deoxy-D-xylulose-5-phosphate (DXP) to 2-C-methyl-D-erythritol 4-phosphate (MEP). This Cellvibrio japonicus (strain Ueda107) (Pseudomonas fluorescens subsp. cellulosa) protein is 1-deoxy-D-xylulose 5-phosphate reductoisomerase.